Here is an 855-residue protein sequence, read N- to C-terminus: Envelope glycoprotein gp150 (855 aa).

Residues 1–784 (MAEGFAVNRQ…WLGNIPRYLK (784 aa)) are Extracellular-facing. N-linked (GlcNAc...) asparagine; by host glycosylation is found at Asn220, Asn258, Asn269, Asn274, Asn298, Asn330, Asn336, Asn342, Asn418, Asn422, Asn448, Asn469, Asn481, Asn499, Asn518, Asn531, and Asn548. The fusion peptide stretch occupies residues 615-635 (VMLALATVLSMAGAGTGATAI). Residues 642 to 692 (HQVLATHQETIEKITEALKVNNLRLVTLEHQVLVIGLKVEAIEKFLYTAFA) are a coiled coil. Residues 661–679 (VNNLRLVTLEHQVLVIGLK) form an immunosuppression region. N-linked (GlcNAc...) asparagine; by host glycans are attached at residues Asn716, Asn720, and Asn736. Residues 735–771 (YNQTKDLQQKFYEIIMDMEQNNVQGRKGLQQLQEWED) are a coiled coil. A helical transmembrane segment spans residues 785 to 805 (GLLGGILGIGLGVLLLILCLP). Residues 806–855 (TLVDCIRNCISKVLGYTVIAMPEVEEEEIQPPMELRRNGRQCDMSEKEEE) lie on the Cytoplasmic side of the membrane. Residues 835–855 (QPPMELRRNGRQCDMSEKEEE) form a disordered region.

As to quaternary structure, the mature envelope protein (Env) consists of a trimer of SU-TM heterodimers attached by noncovalent interactions or by a labile interchain disulfide bond. Post-translationally, specific enzymatic cleavages in vivo yield mature proteins. Envelope glycoproteins are synthesized as an inactive precursor that is N-glycosylated and processed likely by host cell furin or by a furin-like protease in the Golgi to yield the mature SU and TM proteins. The cleavage site between SU and TM requires the minimal sequence [KR]-X-[KR]-R.

It localises to the virion membrane. The protein resides in the host cell membrane. In terms of biological role, the surface protein (SU) attaches the virus to the host cell by binding to its receptor. This interaction triggers the refolding of the transmembrane protein (TM) and is thought to activate its fusogenic potential by unmasking its fusion peptide. Fusion occurs at the host cell plasma membrane. The transmembrane protein (TM) acts as a class I viral fusion protein. Under the current model, the protein has at least 3 conformational states: pre-fusion native state, pre-hairpin intermediate state, and post-fusion hairpin state. During viral and target cell membrane fusion, the coiled coil regions (heptad repeats) assume a trimer-of-hairpins structure, positioning the fusion peptide in close proximity to the C-terminal region of the ectodomain. The formation of this structure appears to drive apposition and subsequent fusion of viral and target cell membranes. Membranes fusion leads to delivery of the nucleocapsid into the cytoplasm. In Feline immunodeficiency virus (strain UK2) (FIV), this protein is Envelope glycoprotein gp150 (env).